A 321-amino-acid chain; its full sequence is G-protein coupled receptor homolog ECRF3 (321 aa).

The Extracellular segment spans residues 1-34 (MEVKLDFSSEDFSNYSYNYSGDIYYGDVAPCVVN). Residues Asn14 and Asn18 are each glycosylated (N-linked (GlcNAc...) asparagine; by host). Residues 35–51 (FLISESALAFIYVLMFL) form a helical membrane-spanning segment. Topologically, residues 52–76 (CNAIGNSLVLRTFLKYRAQAQSFDY) are cytoplasmic. A helical transmembrane segment spans residues 77-93 (LMMGFCLNSLFLAGYLL). Residues 94 to 124 (MRLLRMFEIFMNTELCKLEAFFLNLSIYWSP) are Extracellular-facing. Asn117 carries N-linked (GlcNAc...) asparagine; by host glycosylation. A helical membrane pass occupies residues 125-141 (FILVFISVLRCLLIFCA). Residues 142–149 (TRLWVKKT) are Cytoplasmic-facing. A helical transmembrane segment spans residues 150-166 (LIGQVFLCCSFVLACFG). Over 167 to 196 (ALPHVMVTSYYEPSSCIEEDGVLTEQLRTK) the chain is Extracellular. Residues 197–215 (LNTFHTWYSFAGPLFITVI) form a helical membrane-spanning segment. Residues 216 to 234 (CYSMSCYKLFKTKLSKRAE) lie on the Cytoplasmic side of the membrane. Residues 235-251 (VVTIITMTTLLFIVFCI) traverse the membrane as a helical segment. Over 252 to 286 (PYYIMESIDTLLRVGVIEETCAKRSAIVYGIQCTY) the chain is Extracellular. The chain crosses the membrane as a helical span at residues 287–303 (MLLVLYYCMLPLMFAMF). The Cytoplasmic segment spans residues 304–321 (GSLFRQRMAAWCKTICHC).

This sequence belongs to the G-protein coupled receptor 1 family.

It is found in the host cell membrane. In terms of biological role, may be highly relevant to the process of cellular transformation and rapid T-cell proliferation effected by HVS during latent infections of T-cells in susceptible hosts. The sequence is that of G-protein coupled receptor homolog ECRF3 (74) from Saimiri sciureus (Common squirrel monkey).